A 1156-amino-acid chain; its full sequence is Nuclear pore complex protein Nup133 (1156 aa).

The residue at position 1 (methionine 1) is an N-acetylmethionine. The interval 1–39 (MFPAAPSPRTPGTGSRRGPLAGLGPGSTPRTASRKGLPL) is disordered. A phosphoserine mark is found at serine 7 and serine 15. Arginine 17 carries the post-translational modification Omega-N-methylarginine. At serine 27 the chain carries Phosphoserine. Threonine 28 carries the phosphothreonine modification. Arginine 30 is modified (omega-N-methylarginine). A phosphoserine mark is found at serine 41, serine 45, serine 50, serine 72, serine 131, serine 480, serine 489, serine 493, serine 501, and serine 755. Lysine 787 carries the N6-acetyllysine modification. Serine 1133 carries the post-translational modification Phosphoserine.

The protein belongs to the nucleoporin Nup133 family. Forms part of the Nup160 subcomplex in the nuclear pore which is composed of NUP160, NUP133, NUP107 and Nup96. This complex plays a role in RNA export and in tethering Nup98 and NUP153 to the nucleus. In terms of tissue distribution, widely expressed in fetal and adult tissues. Expressed in the brain and kidney.

It is found in the nucleus. The protein resides in the nuclear pore complex. Its subcellular location is the chromosome. It localises to the centromere. The protein localises to the kinetochore. In terms of biological role, involved in poly(A)+ RNA transport. Involved in nephrogenesis. This is Nuclear pore complex protein Nup133 (NUP133) from Homo sapiens (Human).